Consider the following 323-residue polypeptide: o-succinylbenzoate synthase (323 aa).

Lys134 functions as the Proton donor in the catalytic mechanism. Positions 162, 191, and 214 each coordinate Mg(2+). Lys236 (proton acceptor) is an active-site residue.

The protein belongs to the mandelate racemase/muconate lactonizing enzyme family. MenC type 1 subfamily. A divalent metal cation serves as cofactor.

The catalysed reaction is (1R,6R)-6-hydroxy-2-succinyl-cyclohexa-2,4-diene-1-carboxylate = 2-succinylbenzoate + H2O. It functions in the pathway quinol/quinone metabolism; 1,4-dihydroxy-2-naphthoate biosynthesis; 1,4-dihydroxy-2-naphthoate from chorismate: step 4/7. It participates in quinol/quinone metabolism; menaquinone biosynthesis. Functionally, converts 2-succinyl-6-hydroxy-2,4-cyclohexadiene-1-carboxylate (SHCHC) to 2-succinylbenzoate (OSB). This chain is o-succinylbenzoate synthase, found in Yersinia pseudotuberculosis serotype O:3 (strain YPIII).